Consider the following 101-residue polypeptide: MTSKLVVALLAAFMLSAALCEAAVLSRISSELRCQCIKTHSTPFNPKLIKELTVIDSGPHCENSEIIVKLVNGKEVCLDPKQKWVQKVVEIFLKKAEKQNA.

A signal peptide spans 1–22; it reads MTSKLVVALLAAFMLSAALCEA. Arg27 carries the post-translational modification Citrulline. 2 disulfides stabilise this stretch: Cys34-Cys61 and Cys36-Cys77.

This sequence belongs to the intercrine alpha (chemokine CxC) family. As to quaternary structure, homodimer. Interacts with TNFAIP6 (via Link domain); this interaction interferes with chemokine binding to glycosaminoglycans. In terms of processing, citrullination at Arg-27 prevents proteolysis, and dampens tissue inflammation, it also enhances leukocytosis, possibly through impaired chemokine clearance from the blood circulation.

The protein resides in the secreted. Chemotactic factor that mediates inflammatory response by attracting neutrophils, basophils, and T-cells to clear pathogens and protect the host from infection. Also plays an important role in neutrophil activation. Released in response to an inflammatory stimulus, exerts its effect by binding to the G-protein-coupled receptors CXCR1 and CXCR2, primarily found in neutrophils, monocytes and endothelial cells. G-protein heterotrimer (alpha, beta, gamma subunits) constitutively binds to CXCR1/CXCR2 receptor and activation by IL8 leads to beta and gamma subunits release from Galpha (GNAI2 in neutrophils) and activation of several downstream signaling pathways including PI3K and MAPK pathways. The polypeptide is Interleukin-8 (CXCL8) (Felis catus (Cat)).